The following is a 147-amino-acid chain: Nudix hydrolase 1 (147 aa).

Position 2 is an N-acetylserine (S2). One can recognise a Nudix hydrolase domain in the interval 7-140 (IPRVAVVVFI…EKLFGSGFNP (134 aa)). The Nudix box signature appears at 41–62 (GHLEFGESFEECAAREVMEETG). E56 and E60 together coordinate Mg(2+).

The protein belongs to the Nudix hydrolase family. Homodimer. It depends on Mg(2+) as a cofactor. Requires Mn(2+) as cofactor. In terms of tissue distribution, expressed in roots, stems and leaves.

It is found in the cytoplasm. It carries out the reaction 7,8-dihydroneopterin 3'-triphosphate + H2O = 7,8-dihydroneopterin 3'-phosphate + diphosphate + H(+). It catalyses the reaction NAD(+) + H2O = beta-nicotinamide D-ribonucleotide + AMP + 2 H(+). The enzyme catalyses NADH + H2O = reduced beta-nicotinamide D-ribonucleotide + AMP + 2 H(+). The catalysed reaction is 8-oxo-dGTP + H2O = 8-oxo-dGMP + diphosphate + H(+). In terms of biological role, mediates the hydrolysis of some nucleoside diphosphate derivatives. Its substrate specificity is unclear. In vitro, it can use NTP, dNTP, 8-oxo-GTP, 8-oxo-dGTP, dGTP, dATP, dTTP or dihydroneopterin triphosphate (DHNTP) as substrate. Has some NADH pyrophosphatase activity in vitro; however, such activity may not be relevant in vivo due to the high concentration of manganese used during the experiments. Plays an important role in protection against oxidative DNA and RNA damage by removing oxidatively damaged form of guanine. In Arabidopsis thaliana (Mouse-ear cress), this protein is Nudix hydrolase 1 (NUDT1).